A 62-amino-acid chain; its full sequence is uncharacterized protein (62 aa).

The protein localises to the plastid. Its subcellular location is the chloroplast. This is an uncharacterized protein from Porphyra purpurea (Red seaweed).